We begin with the raw amino-acid sequence, 392 residues long: Probable myosin light chain kinase DDB_G0271550 (392 aa).

The region spanning 20–278 is the Protein kinase domain; it reads YEFGPEIGRG…ASQCIKHPWL (259 aa). ATP is bound by residues 26-34 and Lys-49; that span reads IGRGAFSIV. Asp-142 (proton acceptor) is an active-site residue. The span at 317–326 shows a compositional bias: polar residues; sequence SQSTPNLHSA. The tract at residues 317 to 392 is disordered; the sequence is SQSTPNLHSA…NNNNNNNNNI (76 aa). Residues 327-392 are compositionally biased toward low complexity; it reads NSNTNTNSLS…NNNNNNNNNI (66 aa).

Belongs to the protein kinase superfamily. CAMK Ser/Thr protein kinase family. CaMK subfamily.

It carries out the reaction L-seryl-[myosin light chain] + ATP = O-phospho-L-seryl-[myosin light chain] + ADP + H(+). It catalyses the reaction L-threonyl-[myosin light chain] + ATP = O-phospho-L-threonyl-[myosin light chain] + ADP + H(+). May phosphorylate a specific serine in the N-terminus of a myosin light chain. In Dictyostelium discoideum (Social amoeba), this protein is Probable myosin light chain kinase DDB_G0271550.